We begin with the raw amino-acid sequence, 424 residues long: GTPase Obg (424 aa).

In terms of domain architecture, Obg spans 1-158; the sequence is MFVDRAEVFV…RYISLELKIL (158 aa). A disordered region spans residues 21–42; that stretch reads SFRREKYVPRGGPDGGDGGKGG. A compositionally biased stretch (gly residues) spans 32–42; it reads GPDGGDGGKGG. Residues 159 to 331 enclose the OBG-type G domain; that stretch reads ADVGLLGFPN…LMKEAAAMLT (173 aa). Residues 165-172, 190-194, 212-215, 282-285, and 312-314 contribute to the GTP site; these read GFPNVGKS, FTTLS, DIPG, NKAD, and SAA. Mg(2+)-binding residues include Ser172 and Thr192. The 80-residue stretch at 345–424 folds into the OCT domain; the sequence is KFIPEEKRFT…LNDFEFDYIL (80 aa).

Belongs to the TRAFAC class OBG-HflX-like GTPase superfamily. OBG GTPase family. Monomer. The cofactor is Mg(2+).

The protein resides in the cytoplasm. Its function is as follows. An essential GTPase which binds GTP, GDP and possibly (p)ppGpp with moderate affinity, with high nucleotide exchange rates and a fairly low GTP hydrolysis rate. Plays a role in control of the cell cycle, stress response, ribosome biogenesis and in those bacteria that undergo differentiation, in morphogenesis control. The protein is GTPase Obg of Clostridium kluyveri (strain NBRC 12016).